The chain runs to 185 residues: Ribosome-recycling factor (185 aa).

This sequence belongs to the RRF family.

It localises to the cytoplasm. Responsible for the release of ribosomes from messenger RNA at the termination of protein biosynthesis. May increase the efficiency of translation by recycling ribosomes from one round of translation to another. The protein is Ribosome-recycling factor of Macrococcus caseolyticus (strain JCSC5402) (Macrococcoides caseolyticum).